Here is a 250-residue protein sequence, read N- to C-terminus: Cell division protein ZapD (250 aa).

It belongs to the ZapD family. Interacts with FtsZ.

It localises to the cytoplasm. In terms of biological role, cell division factor that enhances FtsZ-ring assembly. Directly interacts with FtsZ and promotes bundling of FtsZ protofilaments, with a reduction in FtsZ GTPase activity. This Serratia proteamaculans (strain 568) protein is Cell division protein ZapD.